A 156-amino-acid polypeptide reads, in one-letter code: N-glycosidase Npun_R5314 (156 aa).

Belongs to the YbiA family.

The enzyme catalyses 2,5-diamino-6-hydroxy-4-(5-phosphoribosylamino)-pyrimidine + H2O = 2,5,6-triamino-4-hydroxypyrimidine + D-ribose 5-phosphate. The catalysed reaction is 5-amino-6-(5-phospho-D-ribosylamino)uracil + H2O = 5,6-diaminouracil + D-ribose 5-phosphate. Its function is as follows. Catalyzes the hydrolysis of the N-glycosidic bond in the first two intermediates of riboflavin biosynthesis, which are highly reactive metabolites, yielding relatively innocuous products. Thus, can divert a surplus of harmful intermediates into relatively harmless products and pre-empt the damage these intermediates would otherwise do. May act on other substrates in vivo. Has no activity against GTP, nucleoside monophosphates or ADP-ribose. The polypeptide is N-glycosidase Npun_R5314 (Nostoc punctiforme (strain ATCC 29133 / PCC 73102)).